The sequence spans 484 residues: Poly(A) RNA polymerase GLD2 (484 aa).

Residues Ser-62 and Ser-69 each carry the phosphoserine modification. The Nuclear localization signal motif lies at 76-92 (KRLSDEKNLPLDGKRQR). Ser-95 is modified (phosphoserine). Asp-213 and Asp-215 together coordinate Mg(2+). The 55-residue stretch at 386-440 (NLGDLLLGFLKYYATEFDWNSQMISVREAKAIPRPDGIEWRNKYICVEEPFDGTN) folds into the PAP-associated domain.

It belongs to the DNA polymerase type-B-like family. GLD2 subfamily. Interacts with CPEB1, CPEB2, CPSF1 and PABPC1. Interacts with QKI isoform QKI7; promoting recruitment to miRNA miR-122 and miR-122 stabilization. Mg(2+) is required as a cofactor. It depends on Mn(2+) as a cofactor.

It is found in the cytoplasm. The protein resides in the nucleus. The catalysed reaction is RNA(n) + ATP = RNA(n)-3'-adenine ribonucleotide + diphosphate. Functionally, cytoplasmic poly(A) RNA polymerase that adds successive AMP monomers to the 3'-end of specific RNAs, forming a poly(A) tail. In contrast to the canonical nuclear poly(A) RNA polymerase, it only adds poly(A) to selected cytoplasmic mRNAs. Does not play a role in replication-dependent histone mRNA degradation. Adds a single nucleotide to the 3' end of specific miRNAs, monoadenylation stabilizes and prolongs the activity of some but not all miRNAs. This is Poly(A) RNA polymerase GLD2 from Bos taurus (Bovine).